Reading from the N-terminus, the 272-residue chain is Shikimate dehydrogenase (NADP(+)) (272 aa).

Shikimate is bound by residues 14–16 (SKS) and Thr-61. The Proton acceptor role is filled by Lys-65. Position 77 (Glu-77) interacts with NADP(+). Shikimate contacts are provided by Asn-86 and Asp-102. NADP(+)-binding positions include 126 to 130 (GAGGA), 149 to 154 (NRTVSR), and Met-213. Residue Tyr-215 participates in shikimate binding. Gly-237 is a binding site for NADP(+).

It belongs to the shikimate dehydrogenase family. In terms of assembly, homodimer.

It carries out the reaction shikimate + NADP(+) = 3-dehydroshikimate + NADPH + H(+). The protein operates within metabolic intermediate biosynthesis; chorismate biosynthesis; chorismate from D-erythrose 4-phosphate and phosphoenolpyruvate: step 4/7. Involved in the biosynthesis of the chorismate, which leads to the biosynthesis of aromatic amino acids. Catalyzes the reversible NADPH linked reduction of 3-dehydroshikimate (DHSA) to yield shikimate (SA). This Escherichia coli O157:H7 protein is Shikimate dehydrogenase (NADP(+)).